The primary structure comprises 675 residues: Potassium-transporting ATPase ATP-binding subunit (675 aa).

The next 4 membrane-spanning stretches (helical) occupy residues 34–54 (IMFVVEVGMILTLILICFPDI), 65–85 (LITIFIILLITILFANFSEAF), 216–236 (IALFTLLTTLTIIFLVVIVTL), and 245–265 (LILPIAMLIALTVCLIPTTIG). Catalysis depends on Asp304, which acts as the 4-aspartylphosphate intermediate. Residues Asp341, Glu345, 372 to 379 (FTAETRMS), and Lys390 each bind ATP. Mg(2+) contacts are provided by Asp513 and Asp517. A run of 3 helical transmembrane segments spans residues 569–591 (ALTTFSLANDVAKYFAILPALMM), 611–631 (AIISALIFNALIIVALIPIAM), and 644–664 (IFINNMLIYGLGGLIVPFLGI).

The protein belongs to the cation transport ATPase (P-type) (TC 3.A.3) family. Type IA subfamily. As to quaternary structure, the system is composed of three essential subunits: KdpA, KdpB and KdpC.

Its subcellular location is the cell membrane. It catalyses the reaction K(+)(out) + ATP + H2O = K(+)(in) + ADP + phosphate + H(+). Functionally, part of the high-affinity ATP-driven potassium transport (or Kdp) system, which catalyzes the hydrolysis of ATP coupled with the electrogenic transport of potassium into the cytoplasm. This subunit is responsible for energy coupling to the transport system and for the release of the potassium ions to the cytoplasm. In Staphylococcus aureus (strain Newman), this protein is Potassium-transporting ATPase ATP-binding subunit.